Reading from the N-terminus, the 396-residue chain is F-box protein At2g21930 (396 aa).

The F-box domain occupies 19 to 65 (SGNSVQIPFDLIPEILKRLPVKTLARFLSVSKEYTSIIRNRDFMKSY).

The polypeptide is F-box protein At2g21930 (Arabidopsis thaliana (Mouse-ear cress)).